The sequence spans 368 residues: Phosphate acyltransferase (368 aa).

Residues 334 to 368 form a disordered region; the sequence is AAPLGESGRDANGAGQASPSAGQPAEPSAALSSKT.

It belongs to the PlsX family. In terms of assembly, homodimer. Probably interacts with PlsY.

It localises to the cytoplasm. The catalysed reaction is a fatty acyl-[ACP] + phosphate = an acyl phosphate + holo-[ACP]. Its pathway is lipid metabolism; phospholipid metabolism. Its function is as follows. Catalyzes the reversible formation of acyl-phosphate (acyl-PO(4)) from acyl-[acyl-carrier-protein] (acyl-ACP). This enzyme utilizes acyl-ACP as fatty acyl donor, but not acyl-CoA. In Burkholderia pseudomallei (strain 1106a), this protein is Phosphate acyltransferase.